The chain runs to 375 residues: 23S rRNA (uracil(747)-C(5))-methyltransferase RlmC (375 aa).

[4Fe-4S] cluster contacts are provided by cysteine 3, cysteine 11, cysteine 14, and cysteine 87. Residues glutamine 212, phenylalanine 241, glutamate 262, and asparagine 307 each coordinate S-adenosyl-L-methionine. The active-site Nucleophile is the cysteine 334.

The protein belongs to the class I-like SAM-binding methyltransferase superfamily. RNA M5U methyltransferase family. RlmC subfamily.

The catalysed reaction is uridine(747) in 23S rRNA + S-adenosyl-L-methionine = 5-methyluridine(747) in 23S rRNA + S-adenosyl-L-homocysteine + H(+). Catalyzes the formation of 5-methyl-uridine at position 747 (m5U747) in 23S rRNA. The chain is 23S rRNA (uracil(747)-C(5))-methyltransferase RlmC from Shigella boydii serotype 18 (strain CDC 3083-94 / BS512).